The chain runs to 822 residues: Valine--tRNA ligase (822 aa).

A 'HIGH' region motif is present at residues P41–H51. Residues K511–S515 carry the 'KMSKS' region motif. K514 provides a ligand contact to ATP. Residues E765 to K822 are a coiled coil.

Belongs to the class-I aminoacyl-tRNA synthetase family. ValS type 1 subfamily. In terms of assembly, monomer.

The protein localises to the cytoplasm. It carries out the reaction tRNA(Val) + L-valine + ATP = L-valyl-tRNA(Val) + AMP + diphosphate. Functionally, catalyzes the attachment of valine to tRNA(Val). As ValRS can inadvertently accommodate and process structurally similar amino acids such as threonine, to avoid such errors, it has a 'posttransfer' editing activity that hydrolyzes mischarged Thr-tRNA(Val) in a tRNA-dependent manner. In Mesomycoplasma hyopneumoniae (strain 232) (Mycoplasma hyopneumoniae), this protein is Valine--tRNA ligase.